The chain runs to 154 residues: AP-1 complex subunit sigma-2 (154 aa).

The protein belongs to the adaptor complexes small subunit family. As to quaternary structure, adaptor protein complex 1 (AP-1) is a heterotetramer composed of two large adaptins (gamma-type subunit and beta-type subunit), a medium adaptin (mu-type subunit) and a small adaptin (sigma-type subunit).

Its subcellular location is the golgi apparatus. The protein localises to the trans-Golgi network. The protein resides in the cytoplasmic vesicle. It is found in the clathrin-coated vesicle membrane. In terms of biological role, subunit of clathrin-associated adaptor protein complex 1 that plays a role in protein sorting in the trans-Golgi network (TGN) and endosomes. The AP complexes mediate the recruitment of clathrin to membranes and the recognition of sorting signals within the cytosolic tails of transmembrane cargo molecules. Also involved in early steps of phagocytosis and macropinocytosis. The chain is AP-1 complex subunit sigma-2 (ap1s2) from Dictyostelium discoideum (Social amoeba).